The sequence spans 199 residues: ATP-dependent Clp protease proteolytic subunit (199 aa).

Serine 99 acts as the Nucleophile in catalysis. Histidine 124 is an active-site residue.

It belongs to the peptidase S14 family. Fourteen ClpP subunits assemble into 2 heptameric rings which stack back to back to give a disk-like structure with a central cavity, resembling the structure of eukaryotic proteasomes.

It localises to the cytoplasm. The catalysed reaction is Hydrolysis of proteins to small peptides in the presence of ATP and magnesium. alpha-casein is the usual test substrate. In the absence of ATP, only oligopeptides shorter than five residues are hydrolyzed (such as succinyl-Leu-Tyr-|-NHMec, and Leu-Tyr-Leu-|-Tyr-Trp, in which cleavage of the -Tyr-|-Leu- and -Tyr-|-Trp bonds also occurs).. In terms of biological role, cleaves peptides in various proteins in a process that requires ATP hydrolysis. Has a chymotrypsin-like activity. Plays a major role in the degradation of misfolded proteins. The polypeptide is ATP-dependent Clp protease proteolytic subunit (Lactococcus lactis subsp. cremoris (strain SK11)).